The following is a 137-amino-acid chain: Basic phospholipase A2 2 (137 aa).

The signal sequence occupies residues 1-11 (LVAVCVSLLGA). Residues 12–19 (ANIPPQPL) constitute a propeptide that is removed on maturation. 7 disulfide bridges follow: C30/C89, C44/C136, C46/C62, C61/C117, C68/C110, C78/C103, and C96/C108. The Ca(2+) site is built by Y45 and G47. Y48 lines the alpha-D-mannopyranose pocket. A Ca(2+)-binding site is contributed by G49. H65 is an active-site residue. D66 is a binding site for Ca(2+). D66 is an alpha-D-mannopyranose binding site. The active site involves D111.

It belongs to the phospholipase A2 family. Group I subfamily. D49 sub-subfamily. As to quaternary structure, homodimer; non-covalently linked. The cofactor is Ca(2+). Homodimerization and interaction of the catalytically important Asp-49 (here Asp-111) with mannose molecules may render this protein inactive. In terms of tissue distribution, expressed by the venom gland.

The protein localises to the secreted. The enzyme catalyses a 1,2-diacyl-sn-glycero-3-phosphocholine + H2O = a 1-acyl-sn-glycero-3-phosphocholine + a fatty acid + H(+). Functionally, snake venom phospholipase A2 (PLA2) that shows anticoagulant and neurotoxic activities. In terms of biological role, PLA2 catalyzes the calcium-dependent hydrolysis of the 2-acyl groups in 3-sn-phosphoglycerides. This chain is Basic phospholipase A2 2, found in Bungarus caeruleus (Indian krait).